We begin with the raw amino-acid sequence, 75 residues long: Small ribosomal subunit protein bS18 (75 aa).

The protein belongs to the bacterial ribosomal protein bS18 family. Part of the 30S ribosomal subunit. Forms a tight heterodimer with protein bS6.

Functionally, binds as a heterodimer with protein bS6 to the central domain of the 16S rRNA, where it helps stabilize the platform of the 30S subunit. This Shewanella frigidimarina (strain NCIMB 400) protein is Small ribosomal subunit protein bS18.